Consider the following 121-residue polypeptide: Large ribosomal subunit protein uL22 (121 aa).

This sequence belongs to the universal ribosomal protein uL22 family. In terms of assembly, part of the 50S ribosomal subunit.

Functionally, this protein binds specifically to 23S rRNA; its binding is stimulated by other ribosomal proteins, e.g. L4, L17, and L20. It is important during the early stages of 50S assembly. It makes multiple contacts with different domains of the 23S rRNA in the assembled 50S subunit and ribosome. In terms of biological role, the globular domain of the protein is located near the polypeptide exit tunnel on the outside of the subunit, while an extended beta-hairpin is found that lines the wall of the exit tunnel in the center of the 70S ribosome. The sequence is that of Large ribosomal subunit protein uL22 from Rickettsia massiliae (strain Mtu5).